Here is a 158-residue protein sequence, read N- to C-terminus: S-ribosylhomocysteine lyase (158 aa).

Positions 54, 58, and 124 each coordinate Fe cation.

This sequence belongs to the LuxS family. Homodimer. The cofactor is Fe cation.

The enzyme catalyses S-(5-deoxy-D-ribos-5-yl)-L-homocysteine = (S)-4,5-dihydroxypentane-2,3-dione + L-homocysteine. Functionally, involved in the synthesis of autoinducer 2 (AI-2) which is secreted by bacteria and is used to communicate both the cell density and the metabolic potential of the environment. The regulation of gene expression in response to changes in cell density is called quorum sensing. Catalyzes the transformation of S-ribosylhomocysteine (RHC) to homocysteine (HC) and 4,5-dihydroxy-2,3-pentadione (DPD). This is S-ribosylhomocysteine lyase from Lactobacillus gasseri (strain ATCC 33323 / DSM 20243 / BCRC 14619 / CIP 102991 / JCM 1131 / KCTC 3163 / NCIMB 11718 / NCTC 13722 / AM63).